A 127-amino-acid polypeptide reads, in one-letter code: Glycine cleavage system H protein (127 aa).

The 82-residue stretch at 24-105 (TALVGITDFA…YEDGWMVKVS (82 aa)) folds into the Lipoyl-binding domain. K65 is modified (N6-lipoyllysine).

It belongs to the GcvH family. In terms of assembly, the glycine cleavage system is composed of four proteins: P, T, L and H. The cofactor is (R)-lipoate.

In terms of biological role, the glycine cleavage system catalyzes the degradation of glycine. The H protein shuttles the methylamine group of glycine from the P protein to the T protein. The chain is Glycine cleavage system H protein from Prosthecochloris aestuarii (strain DSM 271 / SK 413).